The following is a 193-amino-acid chain: Calcium-binding protein E63-1 (193 aa).

4 consecutive EF-hand domains span residues 35–70 (VEIK…LGIN), 71–106 (VSDE…IQAL), 127–162 (DVTE…IGEP), and 163–193 (LNEQ…RLLL). Residues aspartate 48, asparagine 50, aspartate 52, arginine 54, and glutamate 59 each contribute to the Ca(2+) site. Ca(2+)-binding residues include aspartate 140, aspartate 142, asparagine 144, glutamate 151, aspartate 176, aspartate 178, aspartate 180, arginine 182, and glutamate 187.

The chain is Calcium-binding protein E63-1 (Eip63F-1) from Drosophila melanogaster (Fruit fly).